Reading from the N-terminus, the 335-residue chain is 3-ketodihydrosphingosine reductase TSC10 (335 aa).

9 residues coordinate NADPH: Gly-42, Ser-44, Ser-45, Gly-46, Arg-67, Asp-68, Lys-71, Asp-95, and Leu-96. The GXSXG signature appears at 42 to 46 (GGSSG). Residues 141–207 (LKDGLDGVYW…RGLSDALRSE (67 aa)) form an involved in homodimer formation region. Tyr-190 functions as the Proton acceptor in the catalytic mechanism. NADP(+)-binding residues include Tyr-190, Lys-194, and Ile-223. Residue Lys-194 is the Lowers pKa of active site Tyr of the active site. The chain crosses the membrane as a helical span at residues 288–308 (TNNFLLDTLWLIVSSVGVPIW).

Belongs to the short-chain dehydrogenases/reductases (SDR) family. As to quaternary structure, homodimer; a minor portion forms homotetramers.

It is found in the endoplasmic reticulum membrane. It catalyses the reaction sphinganine + NADP(+) = 3-oxosphinganine + NADPH + H(+). The protein operates within lipid metabolism; sphingolipid metabolism. Its function is as follows. Catalyzes the reduction of 3'-oxosphinganine (3-ketodihydrosphingosine/KDS) to sphinganine (dihydrosphingosine/DHS), the second step of de novo sphingolipid biosynthesis. In Cryptococcus neoformans var. neoformans serotype D (strain JEC21 / ATCC MYA-565) (Filobasidiella neoformans), this protein is 3-ketodihydrosphingosine reductase TSC10 (TSC10).